We begin with the raw amino-acid sequence, 264 residues long: COP9 signalosome complex subunit 7b (264 aa).

Residue A2 is modified to N-acetylalanine. The region spanning 2 to 159 is the PCI domain; sequence AGEQKPSSNL…QLLEVDFCIG (158 aa). Residues 188–237 adopt a coiled-coil conformation; it reads IEQQVLRANQYKENHNRTQQQVEAEVTNIKKTLKATASSSAQEMEQQLAE. Residues 223–232 are compositionally biased toward polar residues; it reads TASSSAQEME. The segment at 223–264 is disordered; the sequence is TASSSAQEMEQQLAERECPPHAEQRQPTKKMSKVKGLVSSRH. The segment covering 235-248 has biased composition (basic and acidic residues); the sequence is LAERECPPHAEQRQ. The residue at position 261 (S261) is a Phosphothreonine. R263 is subject to Phosphoserine.

This sequence belongs to the CSN7/EIF3M family. CSN7 subfamily. Component of the CSN complex, composed of COPS1/GPS1, COPS2, COPS3, COPS4, COPS5, COPS6, COPS7 (COPS7A or COPS7B), COPS8 and COPS9 isoform 1. In the complex, it probably interacts directly with COPS1, COPS2, COPS4, COPS5, COPS6 and COPS8. Interacts with EIF3S6. In terms of assembly, (Microbial infection) Interacts with vaccinia virus protein C9L.

The protein resides in the cytoplasm. Its subcellular location is the nucleus. Component of the COP9 signalosome complex (CSN), a complex involved in various cellular and developmental processes. The CSN complex is an essential regulator of the ubiquitin (Ubl) conjugation pathway by mediating the deneddylation of the cullin subunits of SCF-type E3 ligase complexes, leading to decrease the Ubl ligase activity of SCF-type complexes such as SCF, CSA or DDB2. The complex is also involved in phosphorylation of p53/TP53, JUN, I-kappa-B-alpha/NFKBIA, ITPK1 and IRF8/ICSBP, possibly via its association with CK2 and PKD kinases. CSN-dependent phosphorylation of TP53 and JUN promotes and protects degradation by the Ubl system, respectively. This is COP9 signalosome complex subunit 7b (COPS7B) from Homo sapiens (Human).